We begin with the raw amino-acid sequence, 515 residues long: 2,3-bisphosphoglycerate-independent phosphoglycerate mutase (515 aa).

Residues Asp14 and Ser64 each coordinate Mn(2+). The active-site Phosphoserine intermediate is Ser64. Residues His125, 155-156, Arg187, Arg193, 263-266, and Lys337 each bind substrate; these read RD and RADR. Residues Asp404, His408, Asp445, His446, and His464 each contribute to the Mn(2+) site.

This sequence belongs to the BPG-independent phosphoglycerate mutase family. Monomer. It depends on Mn(2+) as a cofactor.

The catalysed reaction is (2R)-2-phosphoglycerate = (2R)-3-phosphoglycerate. Its pathway is carbohydrate degradation; glycolysis; pyruvate from D-glyceraldehyde 3-phosphate: step 3/5. In terms of biological role, catalyzes the interconversion of 2-phosphoglycerate and 3-phosphoglycerate. This is 2,3-bisphosphoglycerate-independent phosphoglycerate mutase from Pseudomonas aeruginosa (strain ATCC 15692 / DSM 22644 / CIP 104116 / JCM 14847 / LMG 12228 / 1C / PRS 101 / PAO1).